The following is an 832-amino-acid chain: Polyphosphoinositide phosphatase (832 aa).

Positions 145–491 (IEKVDLARTF…GDAIALQYGG (347 aa)) constitute an SAC domain.

As to quaternary structure, component of the PI(3,5)P2 regulatory complex. Requires Mg(2+) as cofactor.

Its subcellular location is the cytoplasm. The protein resides in the vacuole membrane. It carries out the reaction a 1,2-diacyl-sn-glycero-3-phospho-(1D-myo-inositol-3,5-bisphosphate) + H2O = a 1,2-diacyl-sn-glycero-3-phospho-(1D-myo-inositol-3-phosphate) + phosphate. The PI(3,5)P2 regulatory complex regulates both the synthesis and turnover of phosphatidylinositol 3,5-bisphosphate (PtdIns(3,5)P2). The protein is Polyphosphoinositide phosphatase of Schizosaccharomyces pombe (strain 972 / ATCC 24843) (Fission yeast).